The primary structure comprises 275 residues: Ribosomal RNA small subunit methyltransferase A (275 aa).

6 residues coordinate S-adenosyl-L-methionine: N21, L23, G48, E69, D94, and N115.

This sequence belongs to the class I-like SAM-binding methyltransferase superfamily. rRNA adenine N(6)-methyltransferase family. RsmA subfamily.

It localises to the cytoplasm. The catalysed reaction is adenosine(1518)/adenosine(1519) in 16S rRNA + 4 S-adenosyl-L-methionine = N(6)-dimethyladenosine(1518)/N(6)-dimethyladenosine(1519) in 16S rRNA + 4 S-adenosyl-L-homocysteine + 4 H(+). Its function is as follows. Specifically dimethylates two adjacent adenosines (A1518 and A1519) in the loop of a conserved hairpin near the 3'-end of 16S rRNA in the 30S particle. May play a critical role in biogenesis of 30S subunits. The protein is Ribosomal RNA small subunit methyltransferase A of Clostridium botulinum (strain Langeland / NCTC 10281 / Type F).